Consider the following 201-residue polypeptide: Large ribosomal subunit protein bL25 (201 aa).

Belongs to the bacterial ribosomal protein bL25 family. CTC subfamily. In terms of assembly, part of the 50S ribosomal subunit; part of the 5S rRNA/L5/L18/L25 subcomplex. Contacts the 5S rRNA. Binds to the 5S rRNA independently of L5 and L18.

Its function is as follows. This is one of the proteins that binds to the 5S RNA in the ribosome where it forms part of the central protuberance. This chain is Large ribosomal subunit protein bL25, found in Burkholderia vietnamiensis (strain G4 / LMG 22486) (Burkholderia cepacia (strain R1808)).